We begin with the raw amino-acid sequence, 151 residues long: Transcriptional repressor NrdR (151 aa).

A zinc finger lies at 3 to 34 (CPFCSHPDTQVVETREAEDGGFIRRRRQCGGC). Residues 49–139 (PAIVKKDGRR…VYRSFEDVDD (91 aa)) form the ATP-cone domain.

Belongs to the NrdR family. It depends on Zn(2+) as a cofactor.

In terms of biological role, negatively regulates transcription of bacterial ribonucleotide reductase nrd genes and operons by binding to NrdR-boxes. The polypeptide is Transcriptional repressor NrdR (Delftia acidovorans (strain DSM 14801 / SPH-1)).